The chain runs to 424 residues: Exodeoxyribonuclease 7 large subunit (424 aa).

Belongs to the XseA family. In terms of assembly, heterooligomer composed of large and small subunits.

It localises to the cytoplasm. It carries out the reaction Exonucleolytic cleavage in either 5'- to 3'- or 3'- to 5'-direction to yield nucleoside 5'-phosphates.. In terms of biological role, bidirectionally degrades single-stranded DNA into large acid-insoluble oligonucleotides, which are then degraded further into small acid-soluble oligonucleotides. The protein is Exodeoxyribonuclease 7 large subunit of Cyanothece sp. (strain PCC 7425 / ATCC 29141).